Reading from the N-terminus, the 464-residue chain is 3-isopropylmalate dehydratase large subunit (464 aa).

The [4Fe-4S] cluster site is built by cysteine 345, cysteine 405, and cysteine 408.

Belongs to the aconitase/IPM isomerase family. LeuC type 1 subfamily. In terms of assembly, heterodimer of LeuC and LeuD. [4Fe-4S] cluster serves as cofactor.

The enzyme catalyses (2R,3S)-3-isopropylmalate = (2S)-2-isopropylmalate. Its pathway is amino-acid biosynthesis; L-leucine biosynthesis; L-leucine from 3-methyl-2-oxobutanoate: step 2/4. In terms of biological role, catalyzes the isomerization between 2-isopropylmalate and 3-isopropylmalate, via the formation of 2-isopropylmaleate. This is 3-isopropylmalate dehydratase large subunit from Flavobacterium johnsoniae (strain ATCC 17061 / DSM 2064 / JCM 8514 / BCRC 14874 / CCUG 350202 / NBRC 14942 / NCIMB 11054 / UW101) (Cytophaga johnsonae).